We begin with the raw amino-acid sequence, 313 residues long: GTP cyclohydrolase 1 (313 aa).

A compositionally biased stretch (basic and acidic residues) spans 1-10; sequence MAQETTRDGS. Positions 1 to 120 are disordered; that stretch reads MAQETTRDGS…SRGTRERLEE (120 aa). The span at 11-20 shows a compositional bias: low complexity; it reads DSPSGSVSPP. Positions 29–39 are enriched in basic residues; it reads KDKKSSKKRAH. The segment covering 40 to 64 has biased composition (basic and acidic residues); the sequence is SSGERRSSVSKPARDPSDKPEESPS. Residues 72–102 are compositionally biased toward low complexity; that stretch reads TSSTAAAAVPSTITEEVSPSTSVTRSPSPVI. Residues C202, H205, and C273 each contribute to the Zn(2+) site.

The protein belongs to the GTP cyclohydrolase I family. Toroid-shaped homodecamer, composed of two pentamers of five dimers.

It catalyses the reaction GTP + H2O = 7,8-dihydroneopterin 3'-triphosphate + formate + H(+). Its pathway is cofactor biosynthesis; 7,8-dihydroneopterin triphosphate biosynthesis; 7,8-dihydroneopterin triphosphate from GTP: step 1/1. With respect to regulation, GTP shows a positive allosteric effect, and tetrahydrobiopterin inhibits the enzyme activity. Functionally, GTP cyclohydrolase 1 is the first enzyme in the biosynthetic pathway leading to folic acid. The sequence is that of GTP cyclohydrolase 1 (gch-1) from Neurospora crassa (strain ATCC 24698 / 74-OR23-1A / CBS 708.71 / DSM 1257 / FGSC 987).